A 736-amino-acid chain; its full sequence is Elongation factor 2 (736 aa).

The tr-type G domain maps to 18–261 (EQIRNIGITA…MVVKHIPNPR (244 aa)). GTP is bound by residues 27–34 (AHVDHGKT), 93–97 (DTPGH), and 147–150 (NKID). His-602 carries the post-translational modification Diphthamide.

It belongs to the TRAFAC class translation factor GTPase superfamily. Classic translation factor GTPase family. EF-G/EF-2 subfamily.

It is found in the cytoplasm. Functionally, catalyzes the GTP-dependent ribosomal translocation step during translation elongation. During this step, the ribosome changes from the pre-translocational (PRE) to the post-translocational (POST) state as the newly formed A-site-bound peptidyl-tRNA and P-site-bound deacylated tRNA move to the P and E sites, respectively. Catalyzes the coordinated movement of the two tRNA molecules, the mRNA and conformational changes in the ribosome. The chain is Elongation factor 2 from Desulfurococcus amylolyticus (strain DSM 18924 / JCM 16383 / VKM B-2413 / 1221n) (Desulfurococcus kamchatkensis).